The following is a 534-amino-acid chain: Cytidylyl-2-hydroxyethylphosphonate methyltransferase (534 aa).

Positions 38–195 constitute a B12-binding domain; that stretch reads KVLLLNPSAT…EHLNGNVSDD (158 aa). Positions 268–496 constitute a Radical SAM core domain; it reads TVGSRVGQLY…TYKQGIINVP (229 aa). [4Fe-4S] cluster is bound by residues Cys-282, Cys-286, and Cys-289.

It belongs to the radical SAM superfamily. The cofactor is [4Fe-4S] cluster. Methylcob(III)alamin serves as cofactor.

It catalyses the reaction cytidine 5'-{[hydroxy(2-hydroxyethyl)phosphonoyl]phosphate} + AH2 + 2 S-adenosyl-L-methionine = cytidine 5'-({hydroxy[(S)-2-hydroxypropyl]phosphonoyl}phosphate) + 5'-deoxyadenosine + L-methionine + A + S-adenosyl-L-homocysteine + 2 H(+). The protein operates within antibiotic biosynthesis; fosfomycin biosynthesis. Involved in fosfomycin biosynthesis. Catalyzes the C-methylation of cytidylyl-2-hydroxyethylphosphonate (HEP-CMP) to form cytidylyl-2-hydroxypropylphosphonate (HPP-CMP). The C-methylation is not stereoselective and the ratio of (S)- to (R)-HPP-CMP is almost equal in vitro. The sequence is that of Cytidylyl-2-hydroxyethylphosphonate methyltransferase from Streptomyces wedmorensis.